The sequence spans 850 residues: Protein SEY1 (850 aa).

The disordered stretch occupies residues 1 to 27 (MSDLPPPDLGSEEISVSPTSSSSSFVP). Residues 1-741 (MSDLPPPDLG…KRALIQHVTH (741 aa)) are Cytoplasmic-facing. Over residues 12–27 (EEISVSPTSSSSSFVP) the composition is skewed to low complexity. The region spanning 64–297 (NNNYHIVSVF…NEDFLFKKYY (234 aa)) is the GB1/RHD3-type G domain. Residue 74 to 81 (GSQSTGKS) participates in GTP binding. A helical transmembrane segment spans residues 742 to 762 (IPYYIYIVILVLGWNEFMAVL). The Lumenal segment spans residues 763 to 765 (RNP). A helical transmembrane segment spans residues 766–786 (FFFTLLLMLGAGTYVLYHLNL). Topologically, residues 787-850 (LKPAMVVVQR…SDLTPPGEGS (64 aa)) are cytoplasmic. The disordered stretch occupies residues 816 to 850 (QPQEHAKRLSKMAGITEDKPEEIEMSDLTPPGEGS).

This sequence belongs to the TRAFAC class dynamin-like GTPase superfamily. GB1/RHD3 GTPase family. RHD3 subfamily.

The protein localises to the endoplasmic reticulum membrane. Its function is as follows. Cooperates with the reticulon proteins and tubule-shaping DP1 family proteins to generate and maintain the structure of the tubular endoplasmic reticulum network. Has GTPase activity, which is required for its function in ER organization. This is Protein SEY1 from Meyerozyma guilliermondii (strain ATCC 6260 / CBS 566 / DSM 6381 / JCM 1539 / NBRC 10279 / NRRL Y-324) (Yeast).